The chain runs to 628 residues: Propionate--CoA ligase (628 aa).

This sequence belongs to the ATP-dependent AMP-binding enzyme family.

The catalysed reaction is propanoate + ATP + CoA = propanoyl-CoA + AMP + diphosphate. It functions in the pathway organic acid metabolism; propanoate degradation. Catalyzes the synthesis of propionyl-CoA from propionate and CoA. Also converts acetate to acetyl-CoA but with a lower specific activity. The chain is Propionate--CoA ligase (prpE) from Salmonella typhimurium (strain LT2 / SGSC1412 / ATCC 700720).